The chain runs to 707 residues: D-(-)-3-hydroxybutyrate oligomer hydrolase (707 aa).

The first 24 residues, 1 to 24 (MHHDNFRRLGNAAFAAAAALLAVA), serve as a signal peptide directing secretion. Catalysis depends on serine 311, which acts as the Charge relay system.

This sequence belongs to the D-(-)-3-hydroxybutyrate oligomer hydrolase family.

The protein resides in the secreted. The catalysed reaction is (3R)-hydroxybutanoate dimer + H2O = 2 (R)-3-hydroxybutanoate + H(+). It participates in lipid metabolism; butanoate metabolism. Functionally, participates in the degradation of poly-3-hydroxybutyrate (PHB). It works downstream of poly(3-hydroxybutyrate) depolymerase, hydrolyzing D(-)-3-hydroxybutyrate oligomers of various length (3HB-oligomers) into 3HB-monomers. In Cupriavidus pinatubonensis (strain JMP 134 / LMG 1197) (Cupriavidus necator (strain JMP 134)), this protein is D-(-)-3-hydroxybutyrate oligomer hydrolase.